Consider the following 598-residue polypeptide: Major royal jelly protein 5 (598 aa).

The first 17 residues, 1–17, serve as a signal peptide directing secretion; it reads MTTWLLLVVCLGIACQG. 4 N-linked (GlcNAc...) asparagine glycosylation sites follow: asparagine 148, asparagine 164, asparagine 181, and asparagine 324.

Belongs to the major royal jelly protein family. In terms of tissue distribution, found in and secreted from the hypopharyngeal glands of the worker honey bee (at protein level); expression peaks at 8 days post eclosion. Expressed in the brains of adult worker bees peaking at 12 days post eclosion (at protein level). Expressed in the spermatheca of adult queen bees (at protein level); Expression levels are higher in mated queens than in virgin queens. Expressed in the heads of worker bees after eclosion, expression dropping with age and detectable up to 26 days of age.

Its subcellular location is the secreted. Component of royal jelly, a substance produced in the hypopharyngeal gland containing proteins, free amino acids, fatty acids, sugars and other nutrients, which is fed to developing larvae by worker nurse bees. Major royal jelly proteins (MRJPs) are high in essential amino acids and probably have a nutritional function in larval food. All larvae are fed some royal jelly (also known as worker jelly) early in their development but it forms the principal source of nutrition for larvae destined to become queen bees. Produced in the spermatheca of adult queen bees, along with other major royal jelly proteins, where it may act as a nutrient supply for sperm stored by mated queens, or be involved in energy metabolism. The polypeptide is Major royal jelly protein 5 (Apis mellifera (Honeybee)).